We begin with the raw amino-acid sequence, 524 residues long: Protein-export membrane protein SecD (524 aa).

The next 6 helical transmembrane spans lie at 10–30 (VIFLVAAILLSTFALFSPTMG), 366–386 (KFDSLITGIVAVLAVAGVVFI), 389–409 (GKPQVALPMIVTGLSEVYILL), 420–442 (DLSVIAGFIAVIGTGVDDLIIIA), 465–485 (FWVIGAAAATTIIAMSPLAVL), and 487–507 (LGDLQGFAIFTILGVIVGVLV).

The protein belongs to the SecD/SecF family. SecD subfamily. As to quaternary structure, part of the protein translocation apparatus. Forms a homodimer and complexes with SecF.

Its subcellular location is the cell membrane. Involved in protein export. In Haloferax volcanii (strain ATCC 29605 / DSM 3757 / JCM 8879 / NBRC 14742 / NCIMB 2012 / VKM B-1768 / DS2) (Halobacterium volcanii), this protein is Protein-export membrane protein SecD.